The sequence spans 279 residues: Bifunctional protein FolD (279 aa).

Residues 158–160 (GRS), serine 183, and isoleucine 224 contribute to the NADP(+) site.

This sequence belongs to the tetrahydrofolate dehydrogenase/cyclohydrolase family. As to quaternary structure, homodimer.

The enzyme catalyses (6R)-5,10-methylene-5,6,7,8-tetrahydrofolate + NADP(+) = (6R)-5,10-methenyltetrahydrofolate + NADPH. It catalyses the reaction (6R)-5,10-methenyltetrahydrofolate + H2O = (6R)-10-formyltetrahydrofolate + H(+). The protein operates within one-carbon metabolism; tetrahydrofolate interconversion. In terms of biological role, catalyzes the oxidation of 5,10-methylenetetrahydrofolate to 5,10-methenyltetrahydrofolate and then the hydrolysis of 5,10-methenyltetrahydrofolate to 10-formyltetrahydrofolate. This Caldicellulosiruptor saccharolyticus (strain ATCC 43494 / DSM 8903 / Tp8T 6331) protein is Bifunctional protein FolD.